A 242-amino-acid chain; its full sequence is Biosynthetic peptidoglycan transglycosylase (242 aa).

A helical transmembrane segment spans residues 12-32 (LLLWLIALSVLLVLLLRWVPP).

Belongs to the glycosyltransferase 51 family.

It localises to the cell inner membrane. It catalyses the reaction [GlcNAc-(1-&gt;4)-Mur2Ac(oyl-L-Ala-gamma-D-Glu-L-Lys-D-Ala-D-Ala)](n)-di-trans,octa-cis-undecaprenyl diphosphate + beta-D-GlcNAc-(1-&gt;4)-Mur2Ac(oyl-L-Ala-gamma-D-Glu-L-Lys-D-Ala-D-Ala)-di-trans,octa-cis-undecaprenyl diphosphate = [GlcNAc-(1-&gt;4)-Mur2Ac(oyl-L-Ala-gamma-D-Glu-L-Lys-D-Ala-D-Ala)](n+1)-di-trans,octa-cis-undecaprenyl diphosphate + di-trans,octa-cis-undecaprenyl diphosphate + H(+). It participates in cell wall biogenesis; peptidoglycan biosynthesis. Peptidoglycan polymerase that catalyzes glycan chain elongation from lipid-linked precursors. The protein is Biosynthetic peptidoglycan transglycosylase of Stutzerimonas stutzeri (strain A1501) (Pseudomonas stutzeri).